The primary structure comprises 399 residues: Elongation factor Tu (399 aa).

The region spanning 10 to 204 is the tr-type G domain; it reads KPHVNIGTIG…AVDASIPEPE (195 aa). Positions 19–26 are G1; sequence GHVDHGKT. 19–26 is a GTP binding site; that stretch reads GHVDHGKT. Thr26 serves as a coordination point for Mg(2+). A G2 region spans residues 60–64; sequence GITIN. The tract at residues 81-84 is G3; sequence DCPG. Residues 81-85 and 136-139 each bind GTP; these read DCPGH and NKCD. Residues 136–139 are G4; that stretch reads NKCD. The segment at 174-176 is G5; it reads SGL.

It belongs to the TRAFAC class translation factor GTPase superfamily. Classic translation factor GTPase family. EF-Tu/EF-1A subfamily. As to quaternary structure, monomer.

The protein resides in the cytoplasm. The enzyme catalyses GTP + H2O = GDP + phosphate + H(+). Its function is as follows. GTP hydrolase that promotes the GTP-dependent binding of aminoacyl-tRNA to the A-site of ribosomes during protein biosynthesis. This chain is Elongation factor Tu, found in Prochlorococcus marinus (strain SARG / CCMP1375 / SS120).